The sequence spans 150 residues: uncharacterized protein (150 aa).

The interval 49–88 (KEWAENASTDEIDDFLTHDDETERDADPSSGSGPELMNKA) is disordered. Residues 63–75 (FLTHDDETERDAD) show a composition bias toward basic and acidic residues.

This is an uncharacterized protein from Bacillus subtilis (strain 168).